Consider the following 440-residue polypeptide: MAAKWEKKEGNQGELTFEIGADKISEGIDKAFQRTKKNLNVPGFRKGKVPRQIFNQMYGEEALYQDALNIVLPEAYEEAIKETEIEPVDQPQIDVDSMEKGKPWVLKAVVTVKPEVKLGQYKELSVTRQNTRVYAKDVDAELESRREKQAELVLKEDQPAAKGDTVVIDFKGFVDGEPFEGGESENYSLELGSNSFIPGFEDQLVGVKAGDETEVKVTFPKDYQAEDLQDKEATFKVTVHEVKTKELPELDDEFAKDVDEDVDTLEELKAKIKDELKEQKESAAHDAIEDEALNQAVDNAEIQAIPDAMKEDDIHRQMDQYLANMQQQGIDPKTYYKLTGTTEDDLHKQFAADAERRVKTNLVLEAVVEAENIKPSQDEIAAEVKDLASQYNMEESAVRGALTDDMLSHDIAIRQAVDLIADSAKQNAKAEDKKDDSDKN.

Residues 163 to 248 (GDTVVIDFKG…VHEVKTKELP (86 aa)) enclose the PPIase FKBP-type domain.

It belongs to the FKBP-type PPIase family. Tig subfamily.

It localises to the cytoplasm. The enzyme catalyses [protein]-peptidylproline (omega=180) = [protein]-peptidylproline (omega=0). Involved in protein export. Acts as a chaperone by maintaining the newly synthesized protein in an open conformation. Functions as a peptidyl-prolyl cis-trans isomerase. The sequence is that of Trigger factor from Lactiplantibacillus plantarum (strain ATCC BAA-793 / NCIMB 8826 / WCFS1) (Lactobacillus plantarum).